A 907-amino-acid chain; its full sequence is Protein translocase subunit SecA (907 aa).

ATP-binding positions include Gln87, 105–109 (GEGKT), and Asp512. The interval 834 to 907 (QEDVERMEEQ…KKYKQCHGKI (74 aa)) is disordered. Composition is skewed to basic and acidic residues over residues 836–853 (DVER…EAAR) and 873–888 (EEAH…KVGR). Residues Cys892, Cys894, Cys903, and His904 each contribute to the Zn(2+) site. Residues 898 to 907 (KKYKQCHGKI) show a composition bias toward basic residues.

This sequence belongs to the SecA family. As to quaternary structure, monomer and homodimer. Part of the essential Sec protein translocation apparatus which comprises SecA, SecYEG and auxiliary proteins SecDF-YajC and YidC. Zn(2+) is required as a cofactor.

It is found in the cell inner membrane. The protein resides in the cytoplasm. It catalyses the reaction ATP + H2O + cellular proteinSide 1 = ADP + phosphate + cellular proteinSide 2.. Its function is as follows. Part of the Sec protein translocase complex. Interacts with the SecYEG preprotein conducting channel. Has a central role in coupling the hydrolysis of ATP to the transfer of proteins into and across the cell membrane, serving both as a receptor for the preprotein-SecB complex and as an ATP-driven molecular motor driving the stepwise translocation of polypeptide chains across the membrane. The chain is Protein translocase subunit SecA from Aliivibrio fischeri (strain MJ11) (Vibrio fischeri).